A 144-amino-acid polypeptide reads, in one-letter code: Putative low molecular weight protein-tyrosine-phosphatase (144 aa).

Cysteine 9 functions as the Nucleophile in the catalytic mechanism. Arginine 15 is a catalytic residue. Aspartate 115 serves as the catalytic Proton donor.

It belongs to the low molecular weight phosphotyrosine protein phosphatase family.

It carries out the reaction O-phospho-L-tyrosyl-[protein] + H2O = L-tyrosyl-[protein] + phosphate. This is Putative low molecular weight protein-tyrosine-phosphatase from Klebsiella pneumoniae.